A 1139-amino-acid polypeptide reads, in one-letter code: Sterol regulatory element-binding protein 2 (1139 aa).

A transcriptional activation (acidic) region spans residues Met1–Leu50. Residues Met1–Arg479 are Cytoplasmic-facing. Disordered regions lie at residues Glu48–Thr104 and Thr119–Leu143. The segment covering Gly61–Arg77 has biased composition (low complexity). Residues Arg90 to Thr104 are compositionally biased toward polar residues. The segment covering Thr119 to Gln138 has biased composition (pro residues). The interval Gln235–Gly489 is interaction with LMNA. The 51-residue stretch at Glu328–Leu378 folds into the bHLH domain. The interval Leu378–Asn399 is leucine-zipper. A Glycyl lysine isopeptide (Lys-Gly) (interchain with G-Cter in SUMO2) cross-link involves residue Lys462. The helical transmembrane segment at Ile480 to Gln500 threads the bilayer. The Lumenal segment spans residues Trp501–Asp531. The helical transmembrane segment at Trp532–Val552 threads the bilayer. Residues Lys553 to Ser1139 lie on the Cytoplasmic side of the membrane. The residue at position 1096 (Ser1096) is a Phosphoserine.

It belongs to the SREBP family. In terms of assembly, homodimer; efficient DNA binding of the soluble transcription factor fragment requires dimerization with another bHLH protein. Interacts with LMNA. As to quaternary structure, forms a tight complex with SCAP, the SCAP-SREBP complex, in the endoplasmic reticulum membrane and the Golgi apparatus. Interacts with PAQR3; the interaction anchors the SCAP-SREBP complex to the Golgi apparatus in low cholesterol conditions. Interacts (via C-terminal domain) with RNF139. Post-translationally, processed in the Golgi apparatus, releasing the protein from the membrane. At low cholesterol the SCAP-SREBP complex is recruited into COPII vesicles for export from the endoplasmic reticulum. In the Golgi, complex SREBPs are cleaved sequentially by site-1 (MBTPS1, S1P) and site-2 (MBTPS2, S2P) proteases. The first cleavage by site-1 protease occurs within the luminal loop, the second cleavage by site-2 protease occurs within the first transmembrane domain, releasing the transcription factor from the Golgi membrane. Apoptosis triggers cleavage by the cysteine proteases caspase-3 and caspase-7. Cleavage and activation is induced by mediated cholesterol efflux. In terms of processing, phosphorylated by AMPK, leading to suppress protein processing and nuclear translocation, and repress target gene expression. SCAP-free SREBF2 is ubiquitinated by the BCR(ARMC5) complex, leading to its degradation. Post-translationally, ubiquitinated; the nuclear form has a rapid turnover and is rapidly ubiquitinated and degraded by the proteasome in the nucleus.

Its subcellular location is the endoplasmic reticulum membrane. The protein resides in the golgi apparatus membrane. The protein localises to the cytoplasmic vesicle. It is found in the COPII-coated vesicle membrane. It localises to the nucleus. With respect to regulation, activation by cleavage is down-regulated upon activation of SIRT3-dependent PRKAA1/AMPK-alpha signaling cascade which leads to inhibition of ATP-consuming lipogenesis to restore cellular energy balance. In terms of biological role, precursor of the transcription factor form (Processed sterol regulatory element-binding protein 2), which is embedded in the endoplasmic reticulum membrane. Low sterol concentrations promote processing of this form, releasing the transcription factor form that translocates into the nucleus and activates transcription of genes involved in cholesterol biosynthesis. Key transcription factor that regulates expression of genes involved in cholesterol biosynthesis. Binds to the sterol regulatory element 1 (SRE-1) (5'-ATCACCCCAC-3'). Has dual sequence specificity binding to both an E-box motif (5'-ATCACGTGA-3') and to SRE-1 (5'-ATCACCCCAC-3'). Regulates transcription of genes related to cholesterol synthesis pathway. The protein is Sterol regulatory element-binding protein 2 (SREBF2) of Cricetulus griseus (Chinese hamster).